A 148-amino-acid chain; its full sequence is Suppressor APC domain-containing protein 1 (148 aa).

The interval 120 to 148 is disordered; sequence SRQQKGVTQPKEEMAQRGCTKGPRGPTRV.

The protein is Suppressor APC domain-containing protein 1 (SAPCD1) of Homo sapiens (Human).